Here is a 324-residue protein sequence, read N- to C-terminus: UDP-galactose transporter homolog 1 (324 aa).

Helical transmembrane passes span 7 to 27 and 42 to 62; these read LVIA…AQEP and HSSF…LCYL. An N-linked (GlcNAc...) asparagine glycan is attached at N97. 7 consecutive transmembrane segments (helical) span residues 106–126, 135–155, 161–181, 199–219, 237–257, 265–285, and 290–310; these read VGYM…HVLV, KALV…GGAE, ASLY…LTNA, HLMV…LVLF, ILTY…FVFF, LVLA…SIVV, and VRPV…WETV.

This sequence belongs to the nucleotide-sugar transporter family. SLC35B subfamily.

It is found in the endoplasmic reticulum membrane. Functionally, may be involved in specific transport of UDP-Gal from the cytosol to the Golgi lumen. Involved in the maintenance of optimal conditions for the folding of secretory pathway proteins in the endoplasmic reticulum. The protein is UDP-galactose transporter homolog 1 (HUT1) of Eremothecium gossypii (strain ATCC 10895 / CBS 109.51 / FGSC 9923 / NRRL Y-1056) (Yeast).